The chain runs to 345 residues: Protein-arginine kinase (345 aa).

One can recognise a Phosphagen kinase C-terminal domain in the interval leucine 15–serine 245. ATP contacts are provided by residues serine 18–arginine 22, histidine 82, arginine 116, arginine 167–methionine 171, and arginine 198–glutamate 203. An RDXXRA motif of the pArg binding pocket involved in allosteric regulation motif is present at residues arginine 328–alanine 333.

It belongs to the ATP:guanido phosphotransferase family.

The enzyme catalyses L-arginyl-[protein] + ATP = N(omega)-phospho-L-arginyl-[protein] + ADP + H(+). Appears to be allosterically activated by the binding of pArg-containing polypeptides to the pArg-binding pocket localized in the C-terminal domain of McsB. Catalyzes the specific phosphorylation of arginine residues in proteins. The protein is Protein-arginine kinase of Clostridium kluyveri (strain NBRC 12016).